A 429-amino-acid polypeptide reads, in one-letter code: Ribosomal RNA small subunit methyltransferase B (429 aa).

S-adenosyl-L-methionine-binding positions include cysteine 254–lysine 260, aspartate 277, aspartate 303, and aspartate 322. Cysteine 375 serves as the catalytic Nucleophile.

The protein belongs to the class I-like SAM-binding methyltransferase superfamily. RsmB/NOP family.

Its subcellular location is the cytoplasm. It catalyses the reaction cytidine(967) in 16S rRNA + S-adenosyl-L-methionine = 5-methylcytidine(967) in 16S rRNA + S-adenosyl-L-homocysteine + H(+). Specifically methylates the cytosine at position 967 (m5C967) of 16S rRNA. In Yersinia pestis bv. Antiqua (strain Angola), this protein is Ribosomal RNA small subunit methyltransferase B.